Here is a 131-residue protein sequence, read N- to C-terminus: MTTLKVDEDLECALMEQFIEALHQRCTDIPRTQLCVLAISFNRFILHKSPDIFTYIQYYQQKLNSYGFPLPPVVLKSLQMPLTSPEPDADERFRDGDTEFDTAGVTASSCFPVDVKSPSVRAFGNVTFQSD.

This is an uncharacterized protein from Schizosaccharomyces pombe (strain 972 / ATCC 24843) (Fission yeast).